We begin with the raw amino-acid sequence, 650 residues long: MEESVASEGLEFKWGKKKGVGGKKKDVQFYESFTYDGDEYRLYDCVLVGNASEPDSTEPFIGMIIKIWEHANKHIPKKVKLLWFFKPSEIAPYLEGVPNVLANEVFLASGEGLGLANTNQLEAIGGKCSVLCISKDKRNPQPSDEKFNSADFVFCRAFDVGSCKVVDTIDDKIAGVDVKFIFNRACSEKEATAVQNIEADVNGKSDSLKPNGPLARGASGSVRKIEDSAFESSDCKENSNGCKEEKEKGHYQLAIKKSTLAEERSNKDSGSRGNHYNGKDQESEVKKQLTKQKSMPGEERYSNSFEASGSRTIHSISKKAQENDVKKQLTKQKSMPAGERYSQESSGLDDRPLKKQKLDGSVTVRDGWDTTILQNITSDGKKDTGSFKRPRDKVTIEEVPPEKRSFVKNRDLVVSVSEGKTTKTVTEKGISKKPSFGRAEDKMSADDNERNYQVTEVCRRPDAGKSKWFRSLPWEESMREAEKKGTVVLLQNLDPTYTSDEVEDIVYSALNQQCEARMIERTSVTIPHIGEALVIFKTREVAERVIRRLDEGCLLLSSGRPLVASFAKITPPGKPSLFSGHIKLHKTQTRREMRDAVATSHSSQPNNLEFDMAMEWCLHQARHEQASESVSKRQLEEMKSLRINFKLKLP.

Positions 38-169 constitute a BAH domain; that stretch reads DEYRLYDCVL…VGSCKVVDTI (132 aa). Disordered regions lie at residues 202 to 223, 229 to 248, 257 to 359, and 425 to 448; these read NGKSDSLKPNGPLARGASGSVR, AFESSDCKENSNGCKEEKEK, KSTL…QKLD, and VTEKGISKKPSFGRAEDKMSADDN. Basic and acidic residues-rich tracts occupy residues 259-270 and 277-287; these read TLAEERSNKDSG and NGKDQESEVKK. Residues 302–315 show a composition bias toward polar residues; that stretch reads SNSFEASGSRTIHS. 2 stretches are compositionally biased toward basic and acidic residues: residues 348 to 358 and 438 to 448; these read LDDRPLKKQKL and RAEDKMSADDN. Positions 486 to 569 constitute an RRM domain; the sequence is TVVLLQNLDP…RPLVASFAKI (84 aa).

Component of the ASI1-AIPP1-EDM2 (AAE) RNA regulatory complex composed of at least AIPP1/EDM3, ASI1 and EDM2 and may contain CPL2, AIPP2 and AIPP3/BDT1. Binds directly to AIPP1/EDM3 and AIPP2.

Functionally, collaboratively with AIPP1/EDM3 and EDM2, the AAE complex regulates alternative RNA processing (e.g. alternative splicing) and epigenetic silencing (e.g. H3K9me2) of intronic heterochromatin-containing genes as well as genic heterochromatin-containing genes by promoting distal 3' polyadenylation; may associate with intronic heterochromatin and bind gene transcripts to modulate polyadenylation. Required to prevent promoter DNA hypermethylation and transcriptional silencing of some transgenes. Plays a similar role to that of the histone H3K9 demethylase JMJ25/IBM1 in preventing CHG methylation in the bodies of numerous genes. RNA-binding protein that ensures the proper expression of JMJ25/IBM1 full-length transcript by associating with an intronic heterochromatic repeat element of JMJ25/IBM1. Also modulates transposable elements (TE) expression. Contributes to a unique mechanism to deal with the collateral effect of silencing intronic repeat elements. This is Protein ANTI-SILENCING 1 from Arabidopsis thaliana (Mouse-ear cress).